We begin with the raw amino-acid sequence, 823 residues long: Spindle pole body component SPC97 (823 aa).

It belongs to the TUBGCP family. In terms of assembly, interacts with TUB4, SPC72 and SPC98.

The protein resides in the nucleus. The protein localises to the cytoplasm. Its subcellular location is the cytoskeleton. It is found in the microtubule organizing center. It localises to the spindle pole body. In terms of biological role, involved in microtubule organization by the microtubule organizing center, the spindle pole body (SPB). Probably part of the microtubule attachment site at the SPB. In Saccharomyces cerevisiae (strain ATCC 204508 / S288c) (Baker's yeast), this protein is Spindle pole body component SPC97 (SPC97).